The chain runs to 592 residues: RNA-binding protein 47 (592 aa).

Low complexity predominate over residues 1–24 (MTAEDAAAAMSSDSAAGGAASAKA). Residues 1 to 26 (MTAEDAAAAMSSDSAAGGAASAKAPE) form a disordered region. 3 RRM domains span residues 73–151 (CEVF…CSVD), 153–235 (CRLF…WAEP), and 248–320 (KILY…LAKP). 2 positions are modified to asymmetric dimethylarginine; alternate: Arg-397 and Arg-408. Residues Arg-397 and Arg-408 each carry the omega-N-methylarginine; alternate modification.

The protein belongs to the RRM RBM47 family. As to quaternary structure, homodimer. Interacts with A1CF. Interacts with APOBEC1; form an mRNA editing complex. Interacts with RBPMS.

Its subcellular location is the nucleus. The protein resides in the cytoplasm. Functionally, single-stranded RNA-binding protein that functions in a variety of RNA processes, including alternative splicing, RNA stabilization, and RNA editing. Functions as an enzyme-substrate adapter for the cytidine deaminase APOBEC1. With APOBEC1 forms an mRNA editing complex involved into cytidine to uridine editing of a variety of mRNA molecules. Through the binding of their 3'UTR, also stabilizes a variety of mRNAs and regulates the expression of genes such as the interferon alpha/beta receptor and interleukin-10. Also involved in the alternative splicing of several genes including TJP1. Binds the pre-mRNA (U)GCAUG consensus sequences in downstream intronic regions of alternative exons, regulating their exclusion and inclusion into mRNAs. Independently of its RNA-binding activity, could negatively regulate MAVS by promoting its lysosomal degradation. The sequence is that of RNA-binding protein 47 from Canis lupus familiaris (Dog).